Here is a 567-residue protein sequence, read N- to C-terminus: MHGRLKVKTSEEQAEAKRLEREQKLKLYQSATQAVFQKRQAGELDESVLELTSQILGANPDFATLWNCRREVLQQLETQKSPEELAALVKAELGFLESCLRVNPKSYGTWHHRCWLLGRLPEPNWTRELELCARFLEVDERNFHCWDYRRFVATQAAVPPAEELAFTDSLITRNFSNYSSWHYRSCLLPQLHPQPDSGPQGRLPEDVLLKELELVQNAFFTDPNDQSAWFYHRWLLGRADPQDALRCLHVSREEACLTVSFSRPLLVGSRTEILLLMVDDSPLIVEWRTPDGRNRPSHVWLCDLPAASLNDQLPQHTFRVIWTAGDVQKECVLLKGRQEGWCRDSTTDEQLFRCELSVEKSTVLQSELESCKELQELEPENKWCLLTIILLMRALDPLLYEKETLRYFQTLKAVDPMRAAYLDDLRSKFLLENSVLKMEYAEVRVLHLAHKDLTVLCHLEQLLLVTHLDLSHNRLRTLPPALAALRCLEVLQASDNAIESLDGVTNLPRLQELLLCNNRLQRPAVLQPLASCPRLVLLNLQGNPLCQAVGILEQLAELPPSVNSILT.

PFTA repeat units follow at residues 44-78, 88-122, 124-158, 159-193, 207-241, and 363-397; these read LDES…QLET, LVKA…RLPE, NWTR…QAAV, PPAE…QLHP, VLLK…RADP, and VLQS…ALDP. Ser98 carries the phosphoserine modification. LRR repeat units lie at residues 442 to 463, 464 to 486, 487 to 508, 509 to 530, and 534 to 555; these read EVRV…EQLL, LVTH…AALR, CLEV…TNLP, RLQE…QPLA, and RLVL…LEQL.

The protein belongs to the protein prenyltransferase subunit alpha family. As to quaternary structure, heterotrimer composed of RABGGTA, RABGGTB and CHM; within this trimer, RABGGTA and RABGGTB form the catalytic component B, while CHM (component A) mediates peptide substrate binding. The Rab GGTase dimer (RGGT) interacts with CHM (component A) prior to Rab protein binding; the association is stabilized by geranylgeranyl pyrophosphate (GGpp). The CHM:RGGT:Rab complex is destabilized by GGpp. Interacts with non-phosphorylated form of RAB8A; phosphorylation of RAB8A at 'Thr-72' disrupts this interaction.

It catalyses the reaction geranylgeranyl diphosphate + L-cysteinyl-[protein] = S-geranylgeranyl-L-cysteinyl-[protein] + diphosphate. Its activity is regulated as follows. The enzymatic reaction requires the aid of a Rab escort protein (also called component A), such as CHM. Catalyzes the transfer of a geranylgeranyl moiety from geranylgeranyl diphosphate to both cysteines of Rab proteins with the C-terminal sequence -XXCC, -XCXC and -CCXX, such as RAB1A, RAB3A, RAB5A and RAB7A. This chain is Geranylgeranyl transferase type-2 subunit alpha (RABGGTA), found in Pongo abelii (Sumatran orangutan).